A 219-amino-acid chain; its full sequence is Thiamine-phosphate synthase (219 aa).

Residues 44–48 and asparagine 79 contribute to the 4-amino-2-methyl-5-(diphosphooxymethyl)pyrimidine site; that span reads QFREK. Residues aspartate 80 and aspartate 99 each coordinate Mg(2+). Serine 117 serves as a coordination point for 4-amino-2-methyl-5-(diphosphooxymethyl)pyrimidine. 143-145 lines the 2-[(2R,5Z)-2-carboxy-4-methylthiazol-5(2H)-ylidene]ethyl phosphate pocket; sequence TST. A 4-amino-2-methyl-5-(diphosphooxymethyl)pyrimidine-binding site is contributed by lysine 146. Residues glycine 175 and 195–196 each bind 2-[(2R,5Z)-2-carboxy-4-methylthiazol-5(2H)-ylidene]ethyl phosphate; that span reads IS.

Belongs to the thiamine-phosphate synthase family. The cofactor is Mg(2+).

It carries out the reaction 2-[(2R,5Z)-2-carboxy-4-methylthiazol-5(2H)-ylidene]ethyl phosphate + 4-amino-2-methyl-5-(diphosphooxymethyl)pyrimidine + 2 H(+) = thiamine phosphate + CO2 + diphosphate. The catalysed reaction is 2-(2-carboxy-4-methylthiazol-5-yl)ethyl phosphate + 4-amino-2-methyl-5-(diphosphooxymethyl)pyrimidine + 2 H(+) = thiamine phosphate + CO2 + diphosphate. The enzyme catalyses 4-methyl-5-(2-phosphooxyethyl)-thiazole + 4-amino-2-methyl-5-(diphosphooxymethyl)pyrimidine + H(+) = thiamine phosphate + diphosphate. Its pathway is cofactor biosynthesis; thiamine diphosphate biosynthesis; thiamine phosphate from 4-amino-2-methyl-5-diphosphomethylpyrimidine and 4-methyl-5-(2-phosphoethyl)-thiazole: step 1/1. Functionally, condenses 4-methyl-5-(beta-hydroxyethyl)thiazole monophosphate (THZ-P) and 2-methyl-4-amino-5-hydroxymethyl pyrimidine pyrophosphate (HMP-PP) to form thiamine monophosphate (TMP). The sequence is that of Thiamine-phosphate synthase from Bacillus cereus (strain AH820).